We begin with the raw amino-acid sequence, 130 residues long: Glycine cleavage system H protein (130 aa).

The Lipoyl-binding domain maps to 24–106 (TFTVGITDHA…YGDGWLYRIT (83 aa)). Lys-65 is subject to N6-lipoyllysine.

Belongs to the GcvH family. The glycine cleavage system is composed of four proteins: P, T, L and H. The cofactor is (R)-lipoate.

In terms of biological role, the glycine cleavage system catalyzes the degradation of glycine. The H protein shuttles the methylamine group of glycine from the P protein to the T protein. This is Glycine cleavage system H protein from Coxiella burnetii (strain CbuK_Q154) (Coxiella burnetii (strain Q154)).